We begin with the raw amino-acid sequence, 346 residues long: uncharacterized protein (346 aa).

His65 is a binding site for Zn(2+). The active site involves Asp67. Asp89 contacts Zn(2+). Catalysis depends on Glu115, which acts as the Proton acceptor. Zn(2+) is bound by residues Glu116, Glu145, and His319.

This sequence belongs to the peptidase M20A family. Zn(2+) is required as a cofactor. It depends on Co(2+) as a cofactor.

This is an uncharacterized protein from Methanocaldococcus jannaschii (strain ATCC 43067 / DSM 2661 / JAL-1 / JCM 10045 / NBRC 100440) (Methanococcus jannaschii).